The sequence spans 554 residues: Phenylalanine--tRNA ligase beta subunit (554 aa).

A B5 domain is found at 274–351 (LTPDSAEITI…INYGYENFNG (78 aa)). Residues Asp-329, Asp-335, and Asp-339 each coordinate Mg(2+).

It belongs to the phenylalanyl-tRNA synthetase beta subunit family. Type 2 subfamily. As to quaternary structure, tetramer of two alpha and two beta subunits. It depends on Mg(2+) as a cofactor.

Its subcellular location is the cytoplasm. The catalysed reaction is tRNA(Phe) + L-phenylalanine + ATP = L-phenylalanyl-tRNA(Phe) + AMP + diphosphate + H(+). This Methanococcus aeolicus (strain ATCC BAA-1280 / DSM 17508 / OCM 812 / Nankai-3) protein is Phenylalanine--tRNA ligase beta subunit.